Reading from the N-terminus, the 1148-residue chain is Protocadherin-19 (1148 aa).

The signal sequence occupies residues 1 to 21 (MESLLLPVLLLLAILWTQAAA). Cadherin domains follow at residues 22 to 129 (LINL…APSF), 130 to 238 (PAAQ…NPVF), 239 to 346 (SEST…PPVI), 350 to 453 (SVNS…HPHF), 454 to 563 (SKPY…TPVI), and 569 to 672 (INGT…QESM). Residues 22 to 678 (LINLKYSVEE…QESMGSVNLS (657 aa)) are Extracellular-facing. Ca(2+) contacts are provided by Glu31, Glu32, Asp88, and Asp90. Cys93 and Cys99 are disulfide-bonded. Ca(2+)-binding residues include Asp121, Asn123, Asp124, Asn125, Glu140, Asp155, Asp157, Glu199, Asp212, Asp230, Ser231, Asn232, Asp233, Asn234, and Glu249. N-linked (GlcNAc...) asparagine glycosylation is present at Asn261. Residues Asp264, Asp266, Asn270, Asp305, Glu307, Asp338, Asn340, Asp341, Asn342, Glu360, Asp375, Asp377, Asn381, Asp412, and Glu414 each contribute to the Ca(2+) site. Asn420 carries N-linked (GlcNAc...) asparagine glycosylation. Ca(2+) contacts are provided by Asp427, Asp445, Glu446, Asn447, Asp448, Asn449, Glu464, Asp479, Asp481, Asn485, Asn522, Glu524, and Asp537. The N-linked (GlcNAc...) asparagine glycan is linked to Asn485. The N-linked (GlcNAc...) asparagine glycan is linked to Asn546. Ca(2+) is bound by residues Asp555, Val556, Asn557, Asp558, and Asn559. An N-linked (GlcNAc...) asparagine glycan is attached at Asn570. Ca(2+) contacts are provided by Asp594, Asp596, Asn600, and Asp646. Asn676 carries N-linked (GlcNAc...) asparagine glycosylation. A helical membrane pass occupies residues 679-699 (LIFIIALGSIAGILFVTMIFV). The Cytoplasmic segment spans residues 700-1148 (AIKCKRDNKE…GVKRLKDIVL (449 aa)). 2 disordered regions span residues 901-921 (GNSLKDSGHEESDQTDSEHDV) and 1100-1148 (NVNN…DIVL). Composition is skewed to basic and acidic residues over residues 906-921 (DSGHEESDQTDSEHDV), 1109-1123 (SEAEPRGADSEKVMH), and 1130-1148 (KEGRNKESPGVKRLKDIVL).

In terms of assembly, homodimer; antiparallel. In terms of tissue distribution, moderately expressed in all regions of the brain examined, with lowest levels found in the cerebellum. Moderate expression is also found in ovary, and low expression in all other tissues tested. Also detected in primary skin fibroblast.

Its subcellular location is the cell membrane. In terms of biological role, calcium-dependent cell-adhesion protein. The polypeptide is Protocadherin-19 (PCDH19) (Homo sapiens (Human)).